The following is a 1044-amino-acid chain: Translation initiation factor IF-2 (1044 aa).

The disordered stretch occupies residues 31-425; the sequence is VRSASSTVEP…RKSKRAKRQE (395 aa). 2 stretches are compositionally biased toward pro residues: residues 77–98 and 106–116; these read GPAP…PQPA and APAPAPAPRPA. Low complexity predominate over residues 117-148; that stretch reads EPAANPAPAAPPAFQAPAPAPAERPAAAQRPA. Over residues 168–185 the composition is skewed to gly residues; that stretch reads GGPGQGPRPGARPGGPGA. Over residues 204-247 the composition is skewed to basic and acidic residues; the sequence is GPGDRPERSERPDRGDRPQGDRPRSDRPQGERQQGDRPQGDRPG. Over residues 285–304 the composition is skewed to low complexity; it reads GGAPRPGNNPFASNQGMPRP. Residues 305–328 show a composition bias toward pro residues; that stretch reads QGGPRPTPAGPGGPRPGGPRPNPG. Positions 329 to 338 are enriched in low complexity; it reads MMPARPTVGR. Residues 339-409 show a composition bias toward gly residues; it reads PGAGPGAGRP…GTQGAFGRAG (71 aa). A compositionally biased stretch (basic residues) spans 413 to 422; that stretch reads VRGRKSKRAK. Positions 537–709 constitute a tr-type G domain; the sequence is ARPPVVTVMG…VLLTADASLD (173 aa). The tract at residues 546 to 553 is G1; sequence GHVDHGKT. GTP is bound at residue 546-553; the sequence is GHVDHGKT. The G2 stretch occupies residues 571–575; it reads GITQH. The interval 596-599 is G3; sequence DTPG. GTP is bound by residues 596–600 and 650–653; these read DTPGH and NKVD. Positions 650 to 653 are G4; sequence NKVD. The interval 686 to 688 is G5; sequence SAR.

It belongs to the TRAFAC class translation factor GTPase superfamily. Classic translation factor GTPase family. IF-2 subfamily.

It localises to the cytoplasm. Its function is as follows. One of the essential components for the initiation of protein synthesis. Protects formylmethionyl-tRNA from spontaneous hydrolysis and promotes its binding to the 30S ribosomal subunits. Also involved in the hydrolysis of GTP during the formation of the 70S ribosomal complex. The sequence is that of Translation initiation factor IF-2 from Kineococcus radiotolerans (strain ATCC BAA-149 / DSM 14245 / SRS30216).